The chain runs to 79 residues: Pyridoxal 5'-phosphate synthase PDX1-like 4 (79 aa).

Belongs to the PdxS/SNZ family.

This Arabidopsis thaliana (Mouse-ear cress) protein is Pyridoxal 5'-phosphate synthase PDX1-like 4 (PDX1L4).